The following is a 111-amino-acid chain: NADH-ubiquinone oxidoreductase chain 3 (111 aa).

A run of 3 helical transmembrane segments spans residues 1–21 (MLVLVMVVLFTLVLLFVFYIG), 56–76 (FFIMMLMFVIFDLEVVMFLGI), and 84–104 (LISFFMLLMFIFGGFYMEWWY).

Belongs to the complex I subunit 3 family.

The protein localises to the mitochondrion membrane. The enzyme catalyses a ubiquinone + NADH + 5 H(+)(in) = a ubiquinol + NAD(+) + 4 H(+)(out). Functionally, core subunit of the mitochondrial membrane respiratory chain NADH dehydrogenase (Complex I) that is believed to belong to the minimal assembly required for catalysis. Complex I functions in the transfer of electrons from NADH to the respiratory chain. The immediate electron acceptor for the enzyme is believed to be ubiquinone. This is NADH-ubiquinone oxidoreductase chain 3 (ND3) from Ascaris suum (Pig roundworm).